Reading from the N-terminus, the 320-residue chain is Aspartate carbamoyltransferase catalytic subunit (320 aa).

Carbamoyl phosphate contacts are provided by Arg-65 and Thr-66. Lys-93 contributes to the L-aspartate binding site. The carbamoyl phosphate site is built by Arg-115, His-143, and Gln-146. Positions 176 and 230 each coordinate L-aspartate. Residues Gly-271 and Pro-272 each contribute to the carbamoyl phosphate site.

This sequence belongs to the aspartate/ornithine carbamoyltransferase superfamily. ATCase family. Heterododecamer (2C3:3R2) of six catalytic PyrB chains organized as two trimers (C3), and six regulatory PyrI chains organized as three dimers (R2).

It carries out the reaction carbamoyl phosphate + L-aspartate = N-carbamoyl-L-aspartate + phosphate + H(+). Its pathway is pyrimidine metabolism; UMP biosynthesis via de novo pathway; (S)-dihydroorotate from bicarbonate: step 2/3. Catalyzes the condensation of carbamoyl phosphate and aspartate to form carbamoyl aspartate and inorganic phosphate, the committed step in the de novo pyrimidine nucleotide biosynthesis pathway. In Maricaulis maris (strain MCS10) (Caulobacter maris), this protein is Aspartate carbamoyltransferase catalytic subunit.